The sequence spans 1282 residues: ATP-dependent helicase/nuclease subunit A (1282 aa).

In terms of domain architecture, UvrD-like helicase ATP-binding spans 10–481 (SKWTDSQRQV…IELQENFRSS (472 aa)). Position 31–38 (31–38 (AGAGAGKT)) interacts with ATP. The UvrD-like helicase C-terminal domain occupies 516-820 (KPRELYLNED…RLMSIHKSKG (305 aa)).

It belongs to the helicase family. AddA subfamily. As to quaternary structure, heterodimer of AddA and AddB/RexB. Mg(2+) serves as cofactor.

The enzyme catalyses Couples ATP hydrolysis with the unwinding of duplex DNA by translocating in the 3'-5' direction.. It carries out the reaction ATP + H2O = ADP + phosphate + H(+). In terms of biological role, the heterodimer acts as both an ATP-dependent DNA helicase and an ATP-dependent, dual-direction single-stranded exonuclease. Recognizes the chi site generating a DNA molecule suitable for the initiation of homologous recombination. The AddA nuclease domain is required for chi fragment generation; this subunit has the helicase and 3' -&gt; 5' nuclease activities. This is ATP-dependent helicase/nuclease subunit A from Natranaerobius thermophilus (strain ATCC BAA-1301 / DSM 18059 / JW/NM-WN-LF).